The following is a 135-amino-acid chain: Galectin-1 (135 aa).

Alanine 2 is modified (N-acetylalanine). Residues 4–135 (GLVASNLNLK…DFKIKCVAFE (132 aa)) form the Galectin domain. N6-acetyllysine occurs at positions 13, 19, and 29. A Phosphoserine modification is found at serine 30. Residues 45–49 (HFNPR), histidine 53, asparagine 62, and 69–72 (WGTE) contribute to the a beta-D-galactoside site. Residue lysine 108 is modified to N6-acetyllysine; alternate. Position 108 is an N6-succinyllysine; alternate (lysine 108). N6-acetyllysine is present on lysine 128.

As to quaternary structure, homodimer. Binds LGALS3BP. Interacts with CD2, CD3, CD4, CD6, CD7, CD43, ALCAM and CD45. Interacts with laminin (via poly-N-acetyllactosamine). Interacts with SUSD2. Interacts with cargo receptor TMED10; the interaction mediates the translocation from the cytoplasm into the ERGIC (endoplasmic reticulum-Golgi intermediate compartment) and thereby secretion. Interacts with CD69.

The protein resides in the secreted. It is found in the extracellular space. Its subcellular location is the extracellular matrix. The protein localises to the cytoplasm. In terms of biological role, lectin that binds beta-galactoside and a wide array of complex carbohydrates. Plays a role in regulating apoptosis, cell proliferation and cell differentiation. Inhibits CD45 protein phosphatase activity and therefore the dephosphorylation of Lyn kinase. Strong inducer of T-cell apoptosis. Plays a negative role in Th17 cell differentiation via activation of the receptor CD69. The sequence is that of Galectin-1 (Lgals1) from Mus musculus (Mouse).